The following is a 431-amino-acid chain: UDP-N-acetylglucosamine 1-carboxyvinyltransferase (431 aa).

Phosphoenolpyruvate is bound at residue 22 to 23 (KN). Residue arginine 102 participates in UDP-N-acetyl-alpha-D-glucosamine binding. The Proton donor role is filled by cysteine 126. Cysteine 126 carries the post-translational modification 2-(S-cysteinyl)pyruvic acid O-phosphothioketal. UDP-N-acetyl-alpha-D-glucosamine is bound by residues aspartate 318 and isoleucine 340.

Belongs to the EPSP synthase family. MurA subfamily.

The protein localises to the cytoplasm. It catalyses the reaction phosphoenolpyruvate + UDP-N-acetyl-alpha-D-glucosamine = UDP-N-acetyl-3-O-(1-carboxyvinyl)-alpha-D-glucosamine + phosphate. Its pathway is cell wall biogenesis; peptidoglycan biosynthesis. In terms of biological role, cell wall formation. Adds enolpyruvyl to UDP-N-acetylglucosamine. In Bartonella tribocorum (strain CIP 105476 / IBS 506), this protein is UDP-N-acetylglucosamine 1-carboxyvinyltransferase.